Here is a 584-residue protein sequence, read N- to C-terminus: Long-chain-fatty-acid--AMP ligase FadD23 (584 aa).

2 helical membrane passes run 199 to 219 (YFAD…WLPF) and 225 to 245 (LVLG…TSPV).

This sequence belongs to the ATP-dependent AMP-binding enzyme family.

It localises to the membrane. The enzyme catalyses holo-[(hydroxy)phthioceranic acid synthase] + hexadecanoate + ATP = hexadecanoyl-[(hydroxy)phthioceranic acid synthase] + AMP + diphosphate. The catalysed reaction is holo-[(hydroxy)phthioceranic acid synthase] + octadecanoate + ATP = octadecanoyl-[(hydroxy)phthioceranic acid synthase] + AMP + diphosphate. It participates in lipid metabolism; fatty acid biosynthesis. Catalyzes the activation of long-chain fatty acids as acyl-adenylates (acyl-AMP), which are then transferred to the multifunctional polyketide synthase (PKS) type III for further chain extension. Involved in the biosynthesis of sulfolipid 1 (SL-1). The protein is Long-chain-fatty-acid--AMP ligase FadD23 (fadD23) of Mycobacterium bovis (strain ATCC BAA-935 / AF2122/97).